A 215-amino-acid chain; its full sequence is Large ribosomal subunit protein uL4 (215 aa).

A disordered region spans residues 43 to 97 (RRQGTHSTKTRAEVSGGGKKPWRQKGTGRARAGSTRSPIWVGGGKTHTPKPRDYS).

The protein belongs to the universal ribosomal protein uL4 family. In terms of assembly, part of the 50S ribosomal subunit.

In terms of biological role, one of the primary rRNA binding proteins, this protein initially binds near the 5'-end of the 23S rRNA. It is important during the early stages of 50S assembly. It makes multiple contacts with different domains of the 23S rRNA in the assembled 50S subunit and ribosome. Functionally, forms part of the polypeptide exit tunnel. This is Large ribosomal subunit protein uL4 from Brachyspira pilosicoli (Serpulina pilosicoli).